A 1027-amino-acid polypeptide reads, in one-letter code: MRRFLRTGHDPARERLKRDLFQFNKTVEHGFPHQPSALGYSPSLRILAIGTRSGAVKLYGAPGVEFMGLHKENNAVLQIHFLPGQCQLVTLLDDNSLHLWSLKVKGGVSELQEEESFTLRGPPGAAPSATQVTEILPHSSGELLYLGTESGNVFVVQLPGFRTLHDRTICSDEVLQWLPEEARHRRVFEMVEALQEHPRDPNQILIGYSRGLVVIWDLQGSRALSHFLSSQQLENASWQRDGCLIVTCHSDGSHCQWPVSSDTQNPEPLRSSIPYGPFPCKAITKIFWLTTRQGLPFTIFQGGMPRASYGDRHCISVVHNGQQTAFDFTSRVIDFTVLSEADPAAAFDDPYALVVLAEEELVVIDLQTPGWPPVQLPYLASLHCSAITCSHHVSNIPLKLWERIIAAGSRQNSHFSTMEWPIDGGTSLAPPPPQRDLLLTGHEDGTVRFWDASGVCLRLLYKLSTVRVFLTDTDPSENLIAQGEDEWPPLRKVGSFDPYSDDPRLGIQKIFLCKYSGYLAVAGTAGQVLVLELNDEAAEHAVEQVEADLLQDQEGYRWKGHERLAARPGPVCFEAGFQPFVLVQCQPPAVVTSLALHSEWRLVAFGTSHGFGLFDHQQRRQVFVKCTLHPSDQLALEGPLSRVKSLKKSLRQSFRRMRRSRVSSHKRRPGGPTGEAQAQAVNIKAERTGLQNMELAPVQRKIEARSAEDSFTGFVRTLYFADTYLRDSSRHCPSLWAGTNGGTVYAFSLRVPPAERRTDEPVRAEQAKEIQLMHRAPVVGILVLDGHNVPLPEPLEVAHDLSKSPDMQGSHQLLVVSEEQFKVFTLPKVSAKLKLKLTALEGSRVRRVGVAHFGSCRAEDYGEHHLAVLTNLGDIQVVSMPLLKPQVRYSCIRREDVSGIASCVFTKYGQGFYLISPSEFERFSLSTKWLVEPRCLVDSTKAKKHNRPSNGNGTGLKMTSSGHVRNSKSQSDGDEKKPGPVMEHALLNDAWVLKEIQSTLEGDRRSYGNWHPHRVAVGCRLSNGEAE.

WD repeat units follow at residues Ser36 to Leu69, Val76 to Phe117, Val132 to Ile169, Ala193 to Phe227, Leu233 to Pro268, Ala282 to Thr324, Val332 to Leu366, Thr388 to Ser464, Gln508 to Val583, and Thr592 to Ser653. A Phosphoserine modification is found at Ser653. The segment covering Phe654–Pro669 has biased composition (basic residues). The tract at residues Phe654–Ala678 is disordered. WD repeat units lie at residues Val715–Gln771, Gly780–Lys832, Leu837–Ser890, and Val904–Thr927. A disordered region spans residues Thr940 to Val981. The span at Lys957–Gln970 shows a compositional bias: polar residues. Ser971 and Ser1022 each carry phosphoserine.

It belongs to the WD repeat L(2)GL family. As to quaternary structure, interacts with GPSM2/LGN, PRKCI/aPKC and PARD6B/Par-6. The complex is enhanced during mitosis. Interacts with DCAF1. Phosphorylated at Ser-653 by PRKCI. Phosphorylation is enhanced during cell polarization induced by calcium. Phosphorylation may occur during the cell-cell contact-induced cell polarization and may contribute to the segregation of LLGL2 from the PRKCI/aPKC and PARD6B/Par-6 complex.

It localises to the cytoplasm. Functionally, part of a complex with GPSM2/LGN, PRKCI/aPKC and PARD6B/Par-6, which may ensure the correct organization and orientation of bipolar spindles for normal cell division. This complex plays roles in the initial phase of the establishment of epithelial cell polarity. This chain is LLGL scribble cell polarity complex component 2 (Llgl2), found in Mus musculus (Mouse).